We begin with the raw amino-acid sequence, 438 residues long: Exosome complex component RRP45B (438 aa).

2 disordered regions span residues 293-322 and 334-438; these read PTLAKSEVSGPTVAVKEEHRKSSDQERAAE and STEE…KNKS. 2 stretches are compositionally biased toward basic and acidic residues: residues 307–322 and 334–347; these read VKEEHRKSSDQERAAE and STEEVRSSKEEEAA. Positions 380–394 are enriched in polar residues; it reads TKSSSTKKMNGSGNA. Over residues 410–429 the composition is skewed to basic and acidic residues; it reads LGKKDTKHKDGEMTLKDAVK.

The protein belongs to the RNase PH family.

The protein localises to the cytoplasm. It localises to the nucleus. Its function is as follows. Probable 3'-&gt;5' exoribonuclease involved in the regulation of cuticular wax biosynthesis by controlling the expression of CER3. May act by degrading a specific mRNA species encoding a negative regulator of CER3 transcription. Can perform exosomal functions and complement the yeast rrp45 null mutant. This is Exosome complex component RRP45B from Arabidopsis thaliana (Mouse-ear cress).